The chain runs to 238 residues: Hydroxyacylglutathione hydrolase (238 aa).

7 residues coordinate Zn(2+): histidine 52, histidine 54, aspartate 56, histidine 57, histidine 108, aspartate 125, and histidine 163.

Belongs to the metallo-beta-lactamase superfamily. Glyoxalase II family. Monomer. Requires Zn(2+) as cofactor.

The enzyme catalyses an S-(2-hydroxyacyl)glutathione + H2O = a 2-hydroxy carboxylate + glutathione + H(+). It functions in the pathway secondary metabolite metabolism; methylglyoxal degradation; (R)-lactate from methylglyoxal: step 2/2. Its function is as follows. Thiolesterase that catalyzes the hydrolysis of S-D-lactoyl-glutathione to form glutathione and D-lactic acid. The chain is Hydroxyacylglutathione hydrolase from Haemophilus influenzae (strain ATCC 51907 / DSM 11121 / KW20 / Rd).